The chain runs to 309 residues: Uracil phosphoribosyltransferase homolog (309 aa).

A disordered region spans residues 1–38; it reads MATELQCPDSMPCHNQQVNSASTPSPEQLRPGDLILDH. The segment covering 13 to 26 has biased composition (polar residues); it reads CHNQQVNSASTPSP. Position 25 is a phosphoserine (Ser25). GTP contacts are provided by residues Arg133, Arg142, and 176-179; that span reads EKGN. 5-phospho-alpha-D-ribose 1-diphosphate is bound at residue Arg186. GTP contacts are provided by Arg203 and Arg232. 238 to 246 is a binding site for 5-phospho-alpha-D-ribose 1-diphosphate; sequence YPILSTGNT. Uracil is bound at residue 299 to 301; sequence THF.

This sequence belongs to the UPRTase family. Highly expressed in leukocytes, liver, spleen and thymus, with lower expression in brain, lung and skeletal muscle.

The protein resides in the cytoplasm. It is found in the nucleus. This chain is Uracil phosphoribosyltransferase homolog (UPRT), found in Homo sapiens (Human).